Consider the following 427-residue polypeptide: Tuberculostearic acid methyltransferase UfaA1 (427 aa).

This sequence belongs to the CFA/CMAS family.

Its pathway is lipid metabolism; fatty acid biosynthesis. Inhibited by S-adenosyl-L-homocysteine. In terms of biological role, involved in the biosynthesis of the tuberculostearic acid (10-methylstearic-acid or TSA), a constituent lipid of the mycobacterial cell wall. Catalyzes the transfer of the methyl group from S-adenosyl-L-methionine (SAM) to the double bond of oleic acid in phosphatidylethanolamine or phosphatidylcholine to produce TSA. The protein is Tuberculostearic acid methyltransferase UfaA1 of Mycobacterium tuberculosis (strain ATCC 25618 / H37Rv).